The chain runs to 89 residues: Large ribosomal subunit protein bL27 (89 aa).

A disordered region spans residues 1-22 (MAHKKAGGSSRNGRDSESKRLG).

The protein belongs to the bacterial ribosomal protein bL27 family.

In Bartonella henselae (strain ATCC 49882 / DSM 28221 / CCUG 30454 / Houston 1) (Rochalimaea henselae), this protein is Large ribosomal subunit protein bL27.